A 749-amino-acid chain; its full sequence is Photosystem I P700 chlorophyll a apoprotein A1 (749 aa).

Transmembrane regions (helical) follow at residues 70–93 (VFSA…FHGA), 156–179 (LYAT…FHYH), 195–219 (LNHH…HVSL), 291–309 (TAHH…GHMY), 346–369 (WHAQ…HHMY), 385–411 (LSLF…IFLV), 433–455 (AIIS…LYIH), and 531–549 (FLVH…LILL). [4Fe-4S] cluster-binding residues include cysteine 573 and cysteine 582. The next 2 membrane-spanning stretches (helical) occupy residues 589–610 (HVFL…HFSW) and 663–685 (LSAY…MFLF). Histidine 674 is a binding site for chlorophyll a'. 2 residues coordinate chlorophyll a: methionine 682 and tyrosine 690. Position 691 (tryptophan 691) interacts with phylloquinone. The chain crosses the membrane as a helical span at residues 723-743 (AVGVAHYLLGGIATTWAFFLA).

The protein belongs to the PsaA/PsaB family. The PsaA/B heterodimer binds the P700 chlorophyll special pair and subsequent electron acceptors. PSI consists of a core antenna complex that captures photons, and an electron transfer chain that converts photonic excitation into a charge separation. The eukaryotic PSI reaction center is composed of at least 11 subunits. Requires P700 is a chlorophyll a/chlorophyll a' dimer, A0 is one or more chlorophyll a, A1 is one or both phylloquinones and FX is a shared 4Fe-4S iron-sulfur center. as cofactor.

It localises to the plastid. It is found in the chloroplast thylakoid membrane. It catalyses the reaction reduced [plastocyanin] + hnu + oxidized [2Fe-2S]-[ferredoxin] = oxidized [plastocyanin] + reduced [2Fe-2S]-[ferredoxin]. In terms of biological role, psaA and PsaB bind P700, the primary electron donor of photosystem I (PSI), as well as the electron acceptors A0, A1 and FX. PSI is a plastocyanin-ferredoxin oxidoreductase, converting photonic excitation into a charge separation, which transfers an electron from the donor P700 chlorophyll pair to the spectroscopically characterized acceptors A0, A1, FX, FA and FB in turn. Oxidized P700 is reduced on the lumenal side of the thylakoid membrane by plastocyanin. This Zygnema circumcarinatum (Green alga) protein is Photosystem I P700 chlorophyll a apoprotein A1.